The primary structure comprises 117 residues: Large ribosomal subunit protein uL18 (117 aa).

This sequence belongs to the universal ribosomal protein uL18 family. Part of the 50S ribosomal subunit; part of the 5S rRNA/L5/L18/L25 subcomplex. Contacts the 5S and 23S rRNAs.

This is one of the proteins that bind and probably mediate the attachment of the 5S RNA into the large ribosomal subunit, where it forms part of the central protuberance. In Idiomarina loihiensis (strain ATCC BAA-735 / DSM 15497 / L2-TR), this protein is Large ribosomal subunit protein uL18.